The primary structure comprises 129 residues: Ribulose bisphosphate carboxylase small subunit (129 aa).

It belongs to the RuBisCO small chain family. As to quaternary structure, heterohexadecamer of 8 large and 8 small subunits.

RuBisCO catalyzes two reactions: the carboxylation of D-ribulose 1,5-bisphosphate, the primary event in carbon dioxide fixation, as well as the oxidative fragmentation of the pentose substrate. Both reactions occur simultaneously and in competition at the same active site. Although the small subunit is not catalytic it is essential for maximal activity. This Cereibacter sphaeroides (Rhodobacter sphaeroides) protein is Ribulose bisphosphate carboxylase small subunit.